We begin with the raw amino-acid sequence, 466 residues long: VGFKAGVKEYKLTYYTPEYETKDTDILAAFRVTPQPGVPPEEAGAAVAAESSTGTWTTVWTDGLTSLDRYKGRCYNIEPVPGETDQYICYVAYPLDLFEEGSVTNMFTSIVGNVFGFKALRALRLEDLRIPPAYIKTFQGPPHGIQVERDKLNKYGRPLLGCTIKPKLGLSAKNYGRACYECLRGGLDFTKDDENVNSQPFMRWRDRFLFCAEAIYKSQAETGEIKGHYLNATAGTCEEMIKRAVFARELGVPIVMHDYLTGGFTANTSLAHYCRDNGLLLHIHRAMHAVIDRQKNHGMHFRVLAKALRLSGGDHIHAGTVVGKLEGERDITLGFVDLLRDDFVEKDRSRGIYFTQDWVSLPGVIPVASGGIHVWHMPALTEIFGDDSVLQFGGGTLGHPWGNAPGAVANRVAVEACVQARNEGRDLAAEGNAIIREASKWSPELAAACEVWKELKFEFQAVDTLD.

Residue K4 is modified to N6,N6,N6-trimethyllysine. Residues N113 and T163 each coordinate substrate. K165 serves as the catalytic Proton acceptor. K167 contacts substrate. Positions 191, 193, and 194 each coordinate Mg(2+). K191 carries the N6-carboxylysine modification. H284 functions as the Proton acceptor in the catalytic mechanism. Positions 285, 317, and 369 each coordinate substrate.

Belongs to the RuBisCO large chain family. Type I subfamily. In terms of assembly, heterohexadecamer of 8 large chains and 8 small chains; disulfide-linked. The disulfide link is formed within the large subunit homodimers. It depends on Mg(2+) as a cofactor. The disulfide bond which can form in the large chain dimeric partners within the hexadecamer appears to be associated with oxidative stress and protein turnover.

The protein localises to the plastid. It is found in the chloroplast. The enzyme catalyses 2 (2R)-3-phosphoglycerate + 2 H(+) = D-ribulose 1,5-bisphosphate + CO2 + H2O. It carries out the reaction D-ribulose 1,5-bisphosphate + O2 = 2-phosphoglycolate + (2R)-3-phosphoglycerate + 2 H(+). Functionally, ruBisCO catalyzes two reactions: the carboxylation of D-ribulose 1,5-bisphosphate, the primary event in carbon dioxide fixation, as well as the oxidative fragmentation of the pentose substrate in the photorespiration process. Both reactions occur simultaneously and in competition at the same active site. This chain is Ribulose bisphosphate carboxylase large chain, found in Aphelandra sinclairiana (Orange shrimp plant).